A 245-amino-acid chain; its full sequence is Adapter protein MecA (245 aa).

It belongs to the MecA family. Homodimer.

Enables the recognition and targeting of unfolded and aggregated proteins to the ClpC protease or to other proteins involved in proteolysis. The protein is Adapter protein MecA of Streptococcus pneumoniae serotype 19F (strain G54).